A 131-amino-acid polypeptide reads, in one-letter code: MDPRLPAWALVLLGPALVFALGPAPTPEMREKLCGHHFVRALVRVCGGPLWSTEARRPVAAGDGELLQWLERRHLLYGLVANSEPAPGGPGLQPMPQTSHHHRHRRAAASNPARYCCLSGCSQQDLLTLCP.

Residues 1-24 form the signal peptide; that stretch reads MDPRLPAWALVLLGPALVFALGPA. Intrachain disulfides connect Cys-34-Cys-117, Cys-46-Cys-130, and Cys-116-Cys-121. A propeptide spans 58 to 104 (c peptide like); sequence PVAAGDGELLQWLERRHLLYGLVANSEPAPGGPGLQPMPQTSHHHRH. The disordered stretch occupies residues 86–105; sequence APGGPGLQPMPQTSHHHRHR.

It belongs to the insulin family. In terms of assembly, heterodimer of a B chain and an A chain linked by two disulfide bonds. As to expression, highest expression in the Leydig cells of the testis.

The protein localises to the secreted. In terms of biological role, seems to play a role in testicular function. May be a trophic hormone with a role in testicular descent in fetal life. Is a ligand for LGR8 receptor. The polypeptide is Insulin-like 3 (INSL3) (Callithrix jacchus (White-tufted-ear marmoset)).